Reading from the N-terminus, the 265-residue chain is Hydroxyethylthiazole kinase 2 (265 aa).

A substrate-binding site is contributed by Met-39. ATP contacts are provided by Lys-115 and Thr-168. Gly-195 serves as a coordination point for substrate.

Belongs to the Thz kinase family. It depends on Mg(2+) as a cofactor.

The enzyme catalyses 5-(2-hydroxyethyl)-4-methylthiazole + ATP = 4-methyl-5-(2-phosphooxyethyl)-thiazole + ADP + H(+). The protein operates within cofactor biosynthesis; thiamine diphosphate biosynthesis; 4-methyl-5-(2-phosphoethyl)-thiazole from 5-(2-hydroxyethyl)-4-methylthiazole: step 1/1. In terms of biological role, catalyzes the phosphorylation of the hydroxyl group of 4-methyl-5-beta-hydroxyethylthiazole (THZ). The polypeptide is Hydroxyethylthiazole kinase 2 (Clostridium botulinum (strain Kyoto / Type A2)).